Consider the following 250-residue polypeptide: Acetylglutamate kinase (250 aa).

Substrate-binding positions include 41–42 (GG), R63, and N156.

Belongs to the acetylglutamate kinase family. ArgB subfamily.

The protein resides in the cytoplasm. The enzyme catalyses N-acetyl-L-glutamate + ATP = N-acetyl-L-glutamyl 5-phosphate + ADP. It functions in the pathway amino-acid biosynthesis; L-arginine biosynthesis; N(2)-acetyl-L-ornithine from L-glutamate: step 2/4. Catalyzes the ATP-dependent phosphorylation of N-acetyl-L-glutamate. In Listeria monocytogenes serotype 4b (strain F2365), this protein is Acetylglutamate kinase.